Here is a 300-residue protein sequence, read N- to C-terminus: Mitochondrial tricarboxylate transporter 1 (300 aa).

3 Solcar repeats span residues 8-98 (VSPS…FRSM), 107-197 (LSNS…LRDW), and 209-294 (INWL…VVWL). 6 helical membrane passes run 11-31 (SVSVVAGATAGAVEGVATFPI), 67-87 (PKGLFRGCTAMVVGNAGKAGV), 114-134 (LAGMGAGTLEAIFAVTPSETI), 172-191 (GVVPVVMRQGSASAIRLGTY), 208-228 (LINWLATFSIGAASGVVAVYG), and 277-297 (LIVSGGVIFSVYEQVVWLLAG).

It belongs to the mitochondrial carrier (TC 2.A.29) family.

It localises to the mitochondrion membrane. Functionally, mitochondrial tricarboxylate transporter; part of the gene cluster that mediates the biosynthesis of itaconic acid and 2-hydroxyparaconate. Cis-aconitate is secreted by the mitochondrial tricarboxylate transporter MTT1. In the cytosol cis-aconitate is converted into trans-aconitate via isomerization by the aconitate-delta-isomerase ADI1. Decarboxylation of trans-aconitate by the trans-aconitate decarboxylase TAD1 then leads then to the production of itaconic acid. The cytochrome P450 monooxygenase CYP3 further converts itaconate to 2-hydroxyparaconate via oxidation of the double bond, leading to a transient epoxide, which can subsequently be lactonized to produce 2-hydroxyparaconate. Secretion of itaconate and possibly 2-hydroxyparaconate into the medium is mediated by the major facilitator ITP1. The glyoxalase domain-containing protein RDO1 is not involved in the biosynthesis of itaconate and 2-hydroxyparaconate, however, it might play a role in the further conversion of 2-hydroxyparaconate to itatartarate. The sequence is that of Mitochondrial tricarboxylate transporter 1 from Mycosarcoma maydis (Corn smut fungus).